Consider the following 374-residue polypeptide: Aminodeoxychorismate lyase (374 aa).

This sequence belongs to the class-IV pyridoxal-phosphate-dependent aminotransferase family. Homodimer. The cofactor is pyridoxal 5'-phosphate.

It is found in the cytoplasm. It carries out the reaction 4-amino-4-deoxychorismate = 4-aminobenzoate + pyruvate + H(+). Its pathway is cofactor biosynthesis; tetrahydrofolate biosynthesis; 4-aminobenzoate from chorismate: step 2/2. Converts 4-amino-4-deoxychorismate into 4-aminobenzoate (PABA) and pyruvate. The protein is Aminodeoxychorismate lyase (ABZ2) of Saccharomyces cerevisiae (strain ATCC 204508 / S288c) (Baker's yeast).